A 207-amino-acid chain; its full sequence is dTDP-4-dehydrorhamnose 3-epimerase (207 aa).

Substrate contacts are provided by residues R23, D28, 47–49, and R59; that span reads QAN. The active-site Proton acceptor is H62. K72 and H119 together coordinate substrate. The Proton donor role is filled by Y132. E143 and R167 together coordinate substrate.

This sequence belongs to the dTDP-4-dehydrorhamnose 3,5-epimerase family.

It functions in the pathway antibiotic biosynthesis; novobiocin biosynthesis. DTDP-6-deoxy-D-xylo-4-hexulose 3-epimerase that acts together with NovU to catalyze the formation of dTDP-4-keto-6-deoxy-5-C-methyl-L-lyxo-hexose from dTDP-4-keto-6-deoxy-D-glucose in the novobiocin biosynthesis pathway, an aminocoumarin family antibiotic that targets bacterial DNA gyrases. This is dTDP-4-dehydrorhamnose 3-epimerase from Streptomyces niveus (Streptomyces spheroides).